A 284-amino-acid polypeptide reads, in one-letter code: tRNA N(3)-cytidine methyltransferase METTL6 (284 aa).

Trp45 and Tyr49 together coordinate S-adenosyl-L-methionine. The S-adenosyl-L-homocysteine site is built by Tyr49, His61, Glu85, Gly87, Asp110, Asp136, Leu137, and Ile157. Positions 87, 110, 136, 137, and 157 each coordinate S-adenosyl-L-methionine.

This sequence belongs to the methyltransferase superfamily. METL family. As to quaternary structure, monomer. Interacts with SARS1/SerRS; interaction is mediated via tRNA(Ser) and is required for N(3)-methylcytidine methylation.

The protein resides in the cytoplasm. Its subcellular location is the nucleus. It catalyses the reaction cytidine(32) in tRNA(Ser) + S-adenosyl-L-methionine = N(3)-methylcytidine(32) in tRNA(Ser) + S-adenosyl-L-homocysteine + H(+). Functionally, S-adenosyl-L-methionine-dependent methyltransferase that mediates N(3)-methylcytidine modification of residue 32 of the tRNA anticodon loop of tRNA(Ser), including tRNA(Ser)(UGA) and tRNA(Ser)(GCU). Interaction with SARS1/SerRS is required for N(3)-methylcytidine methylation. The chain is tRNA N(3)-cytidine methyltransferase METTL6 from Homo sapiens (Human).